Here is a 262-residue protein sequence, read N- to C-terminus: Small ribosomal subunit protein eS1 (262 aa).

Basic and acidic residues predominate over residues 235–253 (HGDGKGSDEPGAKVSRPEA). Residues 235-262 (HGDGKGSDEPGAKVSRPEAYEPPVQESV) are disordered.

This sequence belongs to the eukaryotic ribosomal protein eS1 family. Component of the small ribosomal subunit. Mature ribosomes consist of a small (40S) and a large (60S) subunit. The 40S subunit contains about 33 different proteins and 1 molecule of RNA (18S). The 60S subunit contains about 49 different proteins and 3 molecules of RNA (28S, 5.8S and 5S).

Its subcellular location is the cytoplasm. The protein is Small ribosomal subunit protein eS1 of Triatoma infestans (Assassin bug).